The sequence spans 2203 residues: MGAQVSTQKTGAHETGLNASGNSIIHYTNINYYKDSASNSANRQDFTQDPSKFTEPVKDVMIKTLPALNSPSAEECGFSDRVRSITIGNSTITTQECANVVVAYGRWPAYLRDDEATAEDQPTQPDVATCRFYTLESVQWQENSAGWWWKFPDALSNMGLFGQNMLYHYLGRSGYTIHVQCNASKFHQGRPIVVCVPEAEMGCSKVDGVVNAQGLSKGETPIEFERTSTTAEVGVVQKAVYNAGMGVGVGNLTIFPHQWINLRRNNSATIVIPYINCVPMDNMFRHNNFTLMVILFAPLKSSGGTNYVSITITVAPMDAEYNGLRLAGHQGLPTMNTPGSTQFLTSDDFQSPCAMPEFDVTPCMDIPGEVHNLMEIAEVDSVVPVNNTSTHMEGTDAFQIKVTAGNVQDKSAIFSFQLNPGNSTVLRRTLLGEILNYYAHWSGSIKLTFLFCGSAMATGKLLLAYSHAGASVPKSRRDAMLGTHVIWDVGLQSSCVLCVPWISQTHYRLVAQDEYTSAGYITCWYQTNIVVPPETPSDCVVLCFVSACNDFSVRMLKDTPFIEQAAELQNDVRQAVEGAIGRVADTIRSGPSNSEAVPALTAAETGHTSQVVPSDTMQTRHVKNYHSRSESTIENFLCRSACVRMAKYEARGDPESTDRFDAWEISVRDMVQMRRKCEMFTYLRFDVEVTFVITSYQHQGSINQDMPPMTHQIMYIPPGGPFPKKVDGYEWQTSTNPSIFWTEGNAPPRMSIPFISIGNAYSSFYDGWSHFDSKGAYGFNTLNKMGHIYCRHVNKETPAEVTSYIRIYFKPKHIRAWVPRPPRLCQYKNKANVNFEATAFTETRDTINTVPVSNHGSGRRGDLAALSTHGAFGQESGAVYVGNYRVLNRHLATHTDWQNCIWEDYNRDLLVSTTTAHGCDTIARCQCKTGVFFCQSKNKHYPVSFEGPGLVEVQESEYYPKRYQSHVLLAAGFSEPGDCGGILRCDHGVIGLVTMGGEGVVGFADVRDLLWLEDDAMEQGVKDYVEQLGNAFGSGFTNQICEQVNLLKESLIGQDSVLEKSLKALVKIISALVIVVRNQDDLITVTATLALIGCTTSPWRWLKQKVSQYYGIPMAERQSNGWLKKFTEMTNACKGMEWIAVKIQKFIEWLKVKNLPEVKEKHEFLNRLKQLPLLESQIATIEQSAPSQSDQEQLFSNVQYFAHYCRKYAPLYAAEAKRVFSLEKKMSNYIQFKSKCRIEPVCLLLHGSPGAGKSVATNLIGRSLAEKLNSSVYSLPPDPDHFDGYKQQAVVIMDDLCQNPDGKDVSLFCQMVSSVDFVPPMAALEEKGILFTSPFVLASTNAGSINAPTVSDSRALARRFHFDMNIEVISMYSQNGKINMPMSVKTCDEECCPVNFKRCCPLVCGKAIQFIDRRTQVRYSLDMLVTEMFREYNHRHSVGATLEALFQGPPVYREIKISVAPETPPPPAIADLLKSVDSEAVREYCKERGWLVPEINSTLQIEKHVSRAFICLQALTTFVSVAGIIYIIYKLFAGFQGAYTGMPNKKPKVPTLRQAKVQGPAFEFAVAMMKRNASTVKTEYGEFTMLGIYDRWAVLPRHAKPGSTILMNDQEVCLLDAKELVDKDGINLELTLLKLNRNEKFRDIRGFLAREEVEVNEAVLAINTSKFPNMYIPVGQVTDYGFLNLGGTPTKRMLMYNFPTRAGQCGGVLMSTGKVLGIHVGGNGHQGFSAALLRHYFNEEQGEIEFIESSKDAGFPVINTPSKTKLEPSVFHQVFEGNKEPAVLRNGDPRLKADFEEAIFSKYIGNVNTHVDEYMQEAVDHYAGQLATLDISTEPMKLEDAVYGTEGLEALDLTTSAGYPYVALGIKKRDILSKRTKDLTKLKECMDKYGLNLPMVTYVKDELRSAEKSPRGKSRLIEASSLNDSVAMRQTFGNLYKVFHLNPGIVTGSAVGCDPDVFWSKIPVMLDGHLIAFDYSGYDASLSPVWFACLKLLLEKLGYSSKETNYIDYLCNSHHLYRDKHYFVRGGMPSGCSGTSIFNSMINNIIIRTLMLKVYKGIDLDQFRMIAYGDDVIASYPWPIDASLLAEAGKDYGLIMTPADKGECFNEVTWTNVTFLKRYFRADEQYPFLVHPVMPMKDIHESIRWTKDPKNTQDHVRSLCLLAWHNGEHEYEEFIHKIRSVPVGRCLTLPAFSTLRRKWLDSF.

Residue Gly-2 is the site of N-myristoyl glycine; by host attachment. Topologically, residues 2-1513 (GAQVSTQKTG…HVSRAFICLQ (1512 aa)) are cytoplasmic. Residues 567 to 583 (ELQNDVRQAVEGAIGRV) form an amphipathic alpha-helix region. Catalysis depends on for protease 2A activity residues His-890 and Asp-908. Zn(2+) is bound by residues Cys-925 and Cys-927. Cys-979 (for protease 2A activity) is an active-site residue. Residues Cys-985 and His-987 each contribute to the Zn(2+) site. The membrane-binding stretch occupies residues 1119–1191 (SNGWLKKFTE…EQSAPSQSDQ (73 aa)). The segment at 1119-1257 (SNGWLKKFTE…SPGAGKSVAT (139 aa)) is oligomerization. The RNA-binding stretch occupies residues 1140 to 1144 (AVKIQ). The 157-residue stretch at 1223-1379 (EKKMSNYIQF…SMYSQNGKIN (157 aa)) folds into the SF3 helicase domain. Positions 1387, 1399, and 1404 each coordinate Zn(2+). A C4-type; degenerate zinc finger spans residues 1387–1404 (CDEECCPVNFKRCCPLVC). The segment at 1431–1438 (EYNHRHSV) is RNA-binding. Positions 1442–1447 (LEALFQ) are oligomerization. The stretch at 1514–1529 (ALTTFVSVAGIIYIIY) is an intramembrane region. Topologically, residues 1530-2203 (KLFAGFQGAY…TLRRKWLDSF (674 aa)) are cytoplasmic. Tyr-1539 bears the O-(5'-phospho-RNA)-tyrosine mark. Residues 1559–1737 (GPAFEFAVAM…FSAALLRHYF (179 aa)) form the Peptidase C3 domain. Residues His-1598, Glu-1629, and Cys-1705 each act as for protease 3C activity in the active site. Positions 1968-2084 (GHLIAFDYSG…SYPWPIDASL (117 aa)) constitute a RdRp catalytic domain. Positions 1974 and 2070 each coordinate Mg(2+).

Belongs to the picornaviruses polyprotein family. In terms of assembly, interacts with capsid protein VP1 and capsid protein VP3 to form heterotrimeric protomers. Interacts with capsid protein VP0, and capsid protein VP3 to form heterotrimeric protomers. Five protomers subsequently associate to form pentamers which serve as building blocks for the capsid. Interacts with capsid protein VP2, capsid protein VP3 and capsid protein VP4 following cleavage of capsid protein VP0. As to quaternary structure, interacts with capsid protein VP1 and capsid protein VP3 in the mature capsid. In terms of assembly, interacts with capsid protein VP0 and capsid protein VP1 to form heterotrimeric protomers. Five protomers subsequently associate to form pentamers which serve as building blocks for the capsid. Interacts with capsid protein VP4 in the mature capsid. Interacts with protein 2C; this interaction may be important for virion morphogenesis. Interacts with capsid protein VP1 and capsid protein VP3. As to quaternary structure, homodimer. In terms of assembly, homohexamer; forms a hexameric ring structure with 6-fold symmetry characteristic of AAA+ ATPases. Interacts (via N-terminus) with host RTN3 (via reticulon domain); this interaction is important for viral replication. Interacts with capsid protein VP3; this interaction may be important for virion morphogenesis. Interacts with protein 3CD. As to quaternary structure, homodimer. Interacts with host GBF1. Interacts (via GOLD domain) with host ACBD3 (via GOLD domain); this interaction allows the formation of a viral protein 3A/ACBD3 heterotetramer with a 2:2 stoichiometry, which will stimulate the recruitment of host PI4KB in order to synthesize PI4P at the viral RNA replication sites. In terms of assembly, interacts with RNA-directed RNA polymerase. Interacts with protein 3AB and with RNA-directed RNA polymerase. As to quaternary structure, interacts with Viral protein genome-linked and with protein 3CD. Mg(2+) is required as a cofactor. Post-translationally, specific enzymatic cleavages in vivo by the viral proteases yield processing intermediates and the mature proteins. In terms of processing, myristoylation is required for the formation of pentamers during virus assembly. Further assembly of 12 pentamers and a molecule of genomic RNA generates the provirion. During virion maturation, immature virions are rendered infectious following cleavage of VP0 into VP4 and VP2. This maturation seems to be an autocatalytic event triggered by the presence of RNA in the capsid and it is followed by a conformational change infectious virion. Post-translationally, myristoylation is required during RNA encapsidation and formation of the mature virus particle. In terms of processing, VPg is uridylylated by the polymerase into VPg-pUpU. This acts as a nucleotide-peptide primer for the genomic RNA replication.

It localises to the virion. Its subcellular location is the host cytoplasm. The protein resides in the host cytoplasmic vesicle membrane. It is found in the host nucleus. It catalyses the reaction a ribonucleoside 5'-triphosphate + H2O = a ribonucleoside 5'-diphosphate + phosphate + H(+). It carries out the reaction Selective cleavage of Tyr-|-Gly bond in the picornavirus polyprotein.. The catalysed reaction is RNA(n) + a ribonucleoside 5'-triphosphate = RNA(n+1) + diphosphate. The enzyme catalyses Selective cleavage of Gln-|-Gly bond in the poliovirus polyprotein. In other picornavirus reactions Glu may be substituted for Gln, and Ser or Thr for Gly.. With respect to regulation, replication or transcription is subject to high level of random mutations by the nucleotide analog ribavirin. In terms of biological role, forms an icosahedral capsid of pseudo T=3 symmetry with capsid proteins VP2 and VP3. The capsid is 300 Angstroms in diameter, composed of 60 copies of each capsid protein and enclosing the viral positive strand RNA genome. Capsid protein VP1 mainly forms the vertices of the capsid. Capsid protein VP1 interacts with host cell receptor to provide virion attachment to target host cells. This attachment induces virion internalization. Tyrosine kinases are probably involved in the entry process. After binding to its receptor, the capsid undergoes conformational changes. Capsid protein VP1 N-terminus (that contains an amphipathic alpha-helix) and capsid protein VP4 are externalized. Together, they shape a pore in the host membrane through which viral genome is translocated to host cell cytoplasm. Forms an icosahedral capsid of pseudo T=3 symmetry with capsid proteins VP2 and VP3. The capsid is 300 Angstroms in diameter, composed of 60 copies of each capsid protein and enclosing the viral positive strand RNA genome. Its function is as follows. Lies on the inner surface of the capsid shell. After binding to the host receptor, the capsid undergoes conformational changes. Capsid protein VP4 is released, Capsid protein VP1 N-terminus is externalized, and together, they shape a pore in the host membrane through which the viral genome is translocated into the host cell cytoplasm. Functionally, component of immature procapsids, which is cleaved into capsid proteins VP4 and VP2 after maturation. Allows the capsid to remain inactive before the maturation step. In terms of biological role, cysteine protease that cleaves viral polyprotein and specific host proteins. It is responsible for the autocatalytic cleavage between the P1 and P2 regions, which is the first cleavage occurring in the polyprotein. Also cleaves the host translation initiation factor EIF4G1, in order to shut down the capped cellular mRNA translation. Inhibits the host nucleus-cytoplasm protein and RNA trafficking by cleaving host members of the nuclear pores. Counteracts stress granule formation probably by antagonizing its assembly or promoting its dissassembly. Plays an essential role in the virus replication cycle by acting as a viroporin. Creates a pore in the host endoplasmic reticulum and as a consequence releases Ca2+ in the cytoplasm of infected cell. In turn, high levels of cytoplasmic calcium may trigger membrane trafficking and transport of viral ER-associated proteins to viroplasms, sites of viral genome replication. Its function is as follows. Induces and associates with structural rearrangements of intracellular membranes. Displays RNA-binding, nucleotide binding and NTPase activities. May play a role in virion morphogenesis and viral RNA encapsidation by interacting with the capsid protein VP3. Functionally, localizes the viral replication complex to the surface of membranous vesicles. Together with protein 3CD binds the Cis-Active RNA Element (CRE) which is involved in RNA synthesis initiation. Acts as a cofactor to stimulate the activity of 3D polymerase, maybe through a nucleid acid chaperone activity. In terms of biological role, localizes the viral replication complex to the surface of membranous vesicles. It inhibits host cell endoplasmic reticulum-to-Golgi apparatus transport and causes the disassembly of the Golgi complex, possibly through GBF1 interaction. This would result in depletion of MHC, trail receptors and IFN receptors at the host cell surface. Plays an essential role in viral RNA replication by recruiting ACBD3 and PI4KB at the viral replication sites, thereby allowing the formation of the rearranged membranous structures where viral replication takes place. Acts as a primer for viral RNA replication and remains covalently bound to viral genomic RNA. VPg is uridylylated prior to priming replication into VPg-pUpU. The oriI viral genomic sequence may act as a template for this. The VPg-pUpU is then used as primer on the genomic RNA poly(A) by the RNA-dependent RNA polymerase to replicate the viral genome. During genome replication, the VPg-RNA linkage is removed by the host TDP2, thereby accelerating replication. During the late stage of the replication cycle, host TDP2 is excluded from sites of viral RNA synthesis and encapsidation, allowing for the generation of progeny virions. Its function is as follows. Involved in the viral replication complex and viral polypeptide maturation. It exhibits protease activity with a specificity and catalytic efficiency that is different from protease 3C. Protein 3CD lacks polymerase activity. Protein 3CD binds to the 5'UTR of the viral genome. Functionally, replicates the viral genomic RNA on the surface of intracellular membranes. May form linear arrays of subunits that propagate along a strong head-to-tail interaction called interface-I. Covalently attaches UMP to a tyrosine of VPg, which is used to prime RNA synthesis. The positive stranded RNA genome is first replicated at virus induced membranous vesicles, creating a dsRNA genomic replication form. This dsRNA is then used as template to synthesize positive stranded RNA genomes. ss(+)RNA genomes are either translated, replicated or encapsidated. In terms of biological role, major viral protease that mediates proteolytic processing of the polyprotein. Cleaves host EIF5B, contributing to host translation shutoff. Also cleaves host PABPC1, contributing to host translation shutoff. Cleaves host NLRP1, triggers host N-glycine-mediated degradation of the autoinhibitory NLRP1 N-terminal fragment. The protein is Genome polyprotein of Echovirus 9 (strain Barty).